The following is a 151-amino-acid chain: MKLILTADVDNLGAPGDTVEVKDGYGRNYLLPRGLAIVATRGAEKQVEGIRRAQEARAVRGLDHAKELKAAIEGLESVTLTVKTAGGSGKLFGSVTVADVAAAIKAAGGPIVDKRSIVLPKAHIKNTGKHAVVVNLHPDVVAKFNLNVVGA.

The protein belongs to the bacterial ribosomal protein bL9 family.

Binds to the 23S rRNA. This is Large ribosomal subunit protein bL9 from Rhodococcus erythropolis (strain PR4 / NBRC 100887).